Consider the following 170-residue polypeptide: Small ribosomal subunit protein bS16 (170 aa).

Residues 109 to 170 (ALAEAEGGPS…AAESEAPAAE (62 aa)) form a disordered region. Residues 131–150 (AKKDEQPTEKAAEPAAEKAA) show a composition bias toward basic and acidic residues. The segment covering 151-170 (EPAAEAPAEAAAESEAPAAE) has biased composition (low complexity).

The protein belongs to the bacterial ribosomal protein bS16 family.

The sequence is that of Small ribosomal subunit protein bS16 from Mycolicibacterium gilvum (strain PYR-GCK) (Mycobacterium gilvum (strain PYR-GCK)).